The following is a 103-amino-acid chain: Large ribosomal subunit protein uL24 (103 aa).

The protein belongs to the universal ribosomal protein uL24 family. In terms of assembly, part of the 50S ribosomal subunit.

One of two assembly initiator proteins, it binds directly to the 5'-end of the 23S rRNA, where it nucleates assembly of the 50S subunit. In terms of biological role, one of the proteins that surrounds the polypeptide exit tunnel on the outside of the subunit. This chain is Large ribosomal subunit protein uL24, found in Listeria monocytogenes serotype 4a (strain HCC23).